A 256-amino-acid polypeptide reads, in one-letter code: Geranylgeranylglyceryl phosphate synthase (256 aa).

2 residues coordinate Mg(2+): D28 and S53. Residues 172 to 178 (YLEAGSG), 203 to 204 (GG), and 225 to 226 (GT) each bind sn-glycerol 1-phosphate.

It belongs to the GGGP/HepGP synthase family. Group II subfamily. It depends on Mg(2+) as a cofactor.

It is found in the cytoplasm. It carries out the reaction sn-glycerol 1-phosphate + (2E,6E,10E)-geranylgeranyl diphosphate = sn-3-O-(geranylgeranyl)glycerol 1-phosphate + diphosphate. The protein operates within membrane lipid metabolism; glycerophospholipid metabolism. Functionally, prenyltransferase that catalyzes the transfer of the geranylgeranyl moiety of geranylgeranyl diphosphate (GGPP) to the C3 hydroxyl of sn-glycerol-1-phosphate (G1P). This reaction is the first ether-bond-formation step in the biosynthesis of archaeal membrane lipids. This is Geranylgeranylglyceryl phosphate synthase from Methanococcus maripaludis (strain DSM 14266 / JCM 13030 / NBRC 101832 / S2 / LL).